The following is an 877-amino-acid chain: MQVQGFFDRLTGRNKEAWKEGRIRGTAVLVKKDVLGLGDFHASLLDGVHNILGHKEGVAFRLVSATARDPSNGGRGKLGKPAHLEELVVTMKSTAAGESVFRVAFEWDESQGIPGAVVVTNSNRSEFFLKTLTLDGVPGKGTVVFVANSWIYPADNYQYERVFFANDTYLPSKMPAPLIPYRQEELNILRGDGKIGPYKEHDRIYRYDYYNDLGQPDKGSKLVRPVLGGSQELPYPRRGRTGRAPTKTDPNTESRLPLLDLNIYVPRDERFGHLKMSDFLGYSLKAIVEGVLPIIRTYVDTTPKEFDSFQDIMELYEGGLKVANASALAEIKKRVPFELIKSLLPVAGDQVLKLPLPHVIKEDKFAWRTDEEFAREMLAGVNPVMIKRLTNFPAKSTLDPNVYGDHTSKITEAHIKHNMEGLTVQNALKGNRLFILDHHDHFMPFLDKINKLDGNFIYASRTILLLKDDGTLKPLAIELSLPHPDGQQHGAVSKVYTPANTGVESQIWQLAKAYASVNDSAWHQLISHWLNTHAVIEPFVIATNRQLSVVHPVHKLLSPHYRDTMNINALARQTLINADGIFEKTVFPGKYALEMSSVVYKNWKFTEQALPVDLVKRGVAVPDPTSPYNVRLLIKDYPYAVDGLVIWWAIERWVGEYLAIYYPNDGVLRGDEELQAWWKEVREVGHGDLKDQDWWPKMDTVQELTRACTIIIWIASALHAAVNFGQYPYAGFLPNRPTVSRRPMPEPGTEEYAKLERGGDEADLVFIHTITSQFQTILGISLIEILSKHSSDEVYLGQRDTPEWTSDAKALDAFKRFGSRLVDIENRIKDMNGNSALKNRNGPVKMPYMLLYPNTSDVTKEKGQGLTAMGIPNSISI.

A PLAT domain is found at 38–165 (GDFHASLLDG…NYQYERVFFA (128 aa)). The Lipoxygenase domain maps to 168–877 (TYLPSKMPAP…AMGIPNSISI (710 aa)). The disordered stretch occupies residues 229 to 252 (GSQELPYPRRGRTGRAPTKTDPNT). 5 residues coordinate Fe cation: H528, H533, H719, N723, and I877.

It belongs to the lipoxygenase family. The cofactor is Fe cation.

It catalyses the reaction (9Z,12Z)-octadecadienoate + O2 = (9S)-hydroperoxy-(10E,12Z)-octadecadienoate. The protein operates within lipid metabolism; oxylipin biosynthesis. In terms of biological role, plant lipoxygenase may be involved in a number of diverse aspects of plant physiology including growth and development, pest resistance, and senescence or responses to wounding. Catalyzes the hydroperoxidation of lipids containing a cis,cis-1,4-pentadiene structure. In Oryza sativa subsp. japonica (Rice), this protein is Probable linoleate 9S-lipoxygenase 4.